The following is a 203-amino-acid chain: Cardiotrophin-1 (203 aa).

Belongs to the IL-6 superfamily. In terms of tissue distribution, highly expressed in heart, skeletal muscle, liver, lung and kidney. Lower levels in testis and brain. No expression in spleen.

Its subcellular location is the secreted. In terms of biological role, induces cardiac myocyte hypertrophy in vitro. Binds to and activates the ILST/gp130 receptor. This chain is Cardiotrophin-1 (Ctf1), found in Mus musculus (Mouse).